The following is a 295-amino-acid chain: Acetylglutamate kinase (295 aa).

Substrate contacts are provided by residues 66-67 (GG), Arg-88, and Asn-193.

Belongs to the acetylglutamate kinase family. ArgB subfamily.

The protein localises to the cytoplasm. The catalysed reaction is N-acetyl-L-glutamate + ATP = N-acetyl-L-glutamyl 5-phosphate + ADP. It functions in the pathway amino-acid biosynthesis; L-arginine biosynthesis; N(2)-acetyl-L-ornithine from L-glutamate: step 2/4. In terms of biological role, catalyzes the ATP-dependent phosphorylation of N-acetyl-L-glutamate. The protein is Acetylglutamate kinase of Rhizobium johnstonii (strain DSM 114642 / LMG 32736 / 3841) (Rhizobium leguminosarum bv. viciae).